We begin with the raw amino-acid sequence, 842 residues long: Protein P (842 aa).

Positions 1 to 177 are terminal protein domain (TP); sequence MPLSYQHFRR…FCGSPYSWEQ (177 aa). Residues 178–345 form a spacer region; that stretch reads ELHHGAFLDG…YCLSHLVNLL (168 aa). The interval 186 to 273 is disordered; that stretch reads DGPSRMGEES…AKNIASRSAS (88 aa). The span at 223-239 shows a compositional bias: polar residues; it reads GPQSQQRPLDRSQQGRS. Residues 346–689 are polymerase/reverse transcriptase domain (RT); the sequence is EDWGPCTEHG…YLNLYPVARQ (344 aa). One can recognise a Reverse transcriptase domain in the interval 356-599; that stretch reads RHHIRIPRTP…YSLNFMGYVI (244 aa). Positions 428, 550, and 551 each coordinate Mg(2+).

This sequence belongs to the hepadnaviridae P protein family.

The catalysed reaction is DNA(n) + a 2'-deoxyribonucleoside 5'-triphosphate = DNA(n+1) + diphosphate. The enzyme catalyses Endonucleolytic cleavage to 5'-phosphomonoester.. With respect to regulation, activated by host HSP70 and HSP40 in vitro to be able to bind the epsilon loop of the pgRNA. Because deletion of the RNase H region renders the protein partly chaperone-independent, the chaperones may be needed indirectly to relieve occlusion of the RNA-binding site by this domain. Inhibited by several reverse-transcriptase inhibitors: Lamivudine, Adefovir and Entecavir. Its function is as follows. Multifunctional enzyme that converts the viral RNA genome into dsDNA in viral cytoplasmic capsids. This enzyme displays a DNA polymerase activity that can copy either DNA or RNA templates, and a ribonuclease H (RNase H) activity that cleaves the RNA strand of RNA-DNA heteroduplexes in a partially processive 3'- to 5'-endonucleasic mode. Neo-synthesized pregenomic RNA (pgRNA) are encapsidated together with the P protein, and reverse-transcribed inside the nucleocapsid. Initiation of reverse-transcription occurs first by binding the epsilon loop on the pgRNA genome, and is initiated by protein priming, thereby the 5'-end of (-)DNA is covalently linked to P protein. Partial (+)DNA is synthesized from the (-)DNA template and generates the relaxed circular DNA (RC-DNA) genome. After budding and infection, the RC-DNA migrates in the nucleus, and is converted into a plasmid-like covalently closed circular DNA (cccDNA). The activity of P protein does not seem to be necessary for cccDNA generation, and is presumably released from (+)DNA by host nuclear DNA repair machinery. The protein is Protein P of Homo sapiens (Human).